The chain runs to 384 residues: PqqA peptide cyclase (384 aa).

In terms of domain architecture, Radical SAM core spans 5 to 220 (VGLPLWLLAE…TNEYREKLKA (216 aa)). [4Fe-4S] cluster is bound by residues Cys19, Cys23, and Cys26.

This sequence belongs to the radical SAM superfamily. PqqE family. In terms of assembly, interacts with PqqD. The interaction is necessary for activity of PqqE. Requires [4Fe-4S] cluster as cofactor.

The enzyme catalyses [PQQ precursor protein] + S-adenosyl-L-methionine = E-Y cross-linked-[PQQ precursor protein] + 5'-deoxyadenosine + L-methionine + H(+). It functions in the pathway cofactor biosynthesis; pyrroloquinoline quinone biosynthesis. In terms of biological role, catalyzes the cross-linking of a glutamate residue and a tyrosine residue in the PqqA protein as part of the biosynthesis of pyrroloquinoline quinone (PQQ). This is PqqA peptide cyclase from Acinetobacter baumannii (strain AB0057).